The following is a 200-amino-acid chain: Recombination protein RecR (200 aa).

A C4-type zinc finger spans residues 58-75 (CSTCFCLKNLPESNCEFC). The Toprim domain occupies 82–177 (STLCIVATPK…SISRLALGLP (96 aa)).

The protein belongs to the RecR family.

May play a role in DNA repair. It seems to be involved in an RecBC-independent recombinational process of DNA repair. It may act with RecF and RecO. In Chlamydia caviae (strain ATCC VR-813 / DSM 19441 / 03DC25 / GPIC) (Chlamydophila caviae), this protein is Recombination protein RecR.